The primary structure comprises 544 residues: CTP synthase (544 aa).

The interval 1–266 (MTKFIFVTGG…DDLICERFGL (266 aa)) is amidoligase domain. Serine 13 is a binding site for CTP. Residue serine 13 coordinates UTP. ATP is bound by residues 14 to 19 (SLGKGI) and aspartate 71. Residues aspartate 71 and glutamate 140 each coordinate Mg(2+). CTP-binding positions include 147 to 149 (DIE), 187 to 192 (KTKPTQ), and lysine 223. UTP is bound by residues 187–192 (KTKPTQ) and lysine 223. The region spanning 291-543 (TVAMVGKYVE…VKAAKNYSEA (253 aa)) is the Glutamine amidotransferase type-1 domain. Glycine 354 lines the L-glutamine pocket. Cysteine 381 serves as the catalytic Nucleophile; for glutamine hydrolysis. L-glutamine contacts are provided by residues 382-385 (LGMQ), glutamate 404, and arginine 471. Active-site residues include histidine 516 and glutamate 518.

Belongs to the CTP synthase family. Homotetramer.

It carries out the reaction UTP + L-glutamine + ATP + H2O = CTP + L-glutamate + ADP + phosphate + 2 H(+). The enzyme catalyses L-glutamine + H2O = L-glutamate + NH4(+). The catalysed reaction is UTP + NH4(+) + ATP = CTP + ADP + phosphate + 2 H(+). The protein operates within pyrimidine metabolism; CTP biosynthesis via de novo pathway; CTP from UDP: step 2/2. Its activity is regulated as follows. Allosterically activated by GTP, when glutamine is the substrate; GTP has no effect on the reaction when ammonia is the substrate. The allosteric effector GTP functions by stabilizing the protein conformation that binds the tetrahedral intermediate(s) formed during glutamine hydrolysis. Inhibited by the product CTP, via allosteric rather than competitive inhibition. In terms of biological role, catalyzes the ATP-dependent amination of UTP to CTP with either L-glutamine or ammonia as the source of nitrogen. Regulates intracellular CTP levels through interactions with the four ribonucleotide triphosphates. The chain is CTP synthase from Psychrobacter cryohalolentis (strain ATCC BAA-1226 / DSM 17306 / VKM B-2378 / K5).